The chain runs to 365 residues: Prostaglandin E2 receptor EP3 subtype (365 aa).

Positions 1–22 (MASMWAPEHSAEAHSNLSSTTD) are disordered. Over 1–30 (MASMWAPEHSAEAHSNLSSTTDDCGSVSVA) the chain is Extracellular. Positions 13 to 22 (AHSNLSSTTD) are enriched in polar residues. Residue Asn-16 is glycosylated (N-linked (GlcNAc...) asparagine). A helical transmembrane segment spans residues 31–55 (FPITMMVTGFVGNALAMLLVSRSYR). The Cytoplasmic segment spans residues 56 to 68 (RRESKRKKSFLLC). A helical transmembrane segment spans residues 69–89 (IGWLALTDLVGQLLTSPVVIL). The Extracellular portion of the chain corresponds to 90 to 108 (VYLSQRRWEQLDPSGRLCT). A disulfide bond links Cys-107 and Cys-184. Residues 109–130 (FFGLTMTVFGLSSLLVASAMAV) traverse the membrane as a helical segment. Topologically, residues 131-151 (ERALAIRAPHWYASHMKTRAT) are cytoplasmic. A helical transmembrane segment spans residues 152–173 (PVLLGVWLSVLAFALLPVLGVG). The Extracellular segment spans residues 174-203 (RYSVQWPGTWCFISTGPAGNETDPAREPGS). Asn-193 carries N-linked (GlcNAc...) asparagine glycosylation. A helical membrane pass occupies residues 204–229 (VAFASAFACLGLLALVVTFACNLATI). Residues 230–259 (KALVSRCRAKAAVSQSSAQWGRITTETAIQ) lie on the Cytoplasmic side of the membrane. A helical membrane pass occupies residues 260-283 (LMGIMCVLSVCWSPLLIMMLKMIF). Residues 284 to 303 (NQMSVEQCKTQMGKEKECNS) lie on the Extracellular side of the membrane. Residues 304–325 (FLIAVRLASLNQILDPWVYLLL) traverse the membrane as a helical segment. Residues 326 to 365 (RKILLRKFCQIRDHTNYASSSTSLPCPGSSALMWSDQLER) lie on the Cytoplasmic side of the membrane.

It belongs to the G-protein coupled receptor 1 family. In terms of assembly, interacts (via C-terminus) with MKLN1. Ligand binding is affected by cAMP-dependent phosphorylation in brain membranes. As to expression, detected in platelets. Kidney, uterus, and mastocytoma cells, and in a lesser amount in brain, thymus, lung, heart, stomach and spleen.

It localises to the cell membrane. Functionally, receptor for prostaglandin E2 (PGE2). Required for normal development of fever in response to pyrinogens, including IL1B, prostaglandin E2 and bacterial lipopolysaccharide (LPS). Required for normal potentiation of platelet aggregation by prostaglandin E2, and thus plays a role in the regulation of blood coagulation. Required for increased HCO3(-) secretion in the duodenum in response to mucosal acidification, and thereby contributes to the protection of the mucosa against acid-induced ulceration. Not required for normal kidney function, normal urine volume and osmolality. In terms of biological role, receptor for prostaglandin E2 (PGE2); ligand binding activates a signaling cascade via G(i) proteins that leads to inhibition of adenylate cyclase. Shows high agonist-independent constitutive inhibition of adenylate cyclase. Receptor for prostaglandin E2 (PGE2); ligand binding activates a signaling cascade via G(i) proteins that leads to inhibition of adenylate cyclase. Requires much higher ligand concentrations than isoform Alpha for activation. Does not display agonist-independent constitutive inhibition of adenylate cyclase. Its function is as follows. Receptor for prostaglandin E2 (PGE2); ligand binding can activate several distinct signaling cascades, resulting in activation or inhibition of adenylate cyclase. The polypeptide is Prostaglandin E2 receptor EP3 subtype (Ptger3) (Mus musculus (Mouse)).